The chain runs to 288 residues: Pantothenate synthetase (288 aa).

30 to 37 (MGALHEGH) contributes to the ATP binding site. The active-site Proton donor is histidine 37. Glutamine 61 provides a ligand contact to (R)-pantoate. Glutamine 61 serves as a coordination point for beta-alanine. 147–150 (GEKD) is an ATP binding site. Glutamine 153 serves as a coordination point for (R)-pantoate. Residues valine 176 and 184–187 (ISSR) contribute to the ATP site.

The protein belongs to the pantothenate synthetase family. In terms of assembly, homodimer.

The protein resides in the cytoplasm. The catalysed reaction is (R)-pantoate + beta-alanine + ATP = (R)-pantothenate + AMP + diphosphate + H(+). It functions in the pathway cofactor biosynthesis; (R)-pantothenate biosynthesis; (R)-pantothenate from (R)-pantoate and beta-alanine: step 1/1. In terms of biological role, catalyzes the condensation of pantoate with beta-alanine in an ATP-dependent reaction via a pantoyl-adenylate intermediate. In Chlorobium phaeobacteroides (strain BS1), this protein is Pantothenate synthetase.